A 309-amino-acid polypeptide reads, in one-letter code: Probable MRF1 mitochondrial N(5)-glutamine methyltransferase mtq1 (309 aa).

S-adenosyl-L-methionine is bound by residues 124–128, D148, and N200; that span reads CTGSG. 200-203 serves as a coordination point for substrate; that stretch reads NPPY.

It belongs to the protein N5-glutamine methyltransferase family.

The protein resides in the mitochondrion. The catalysed reaction is L-glutaminyl-[peptide chain release factor] + S-adenosyl-L-methionine = N(5)-methyl-L-glutaminyl-[peptide chain release factor] + S-adenosyl-L-homocysteine + H(+). In terms of biological role, methylates MRF1 on 'Gln-270' using S-adenosyl L-methionine as methyl donor. The polypeptide is Probable MRF1 mitochondrial N(5)-glutamine methyltransferase mtq1 (mtq1) (Schizosaccharomyces pombe (strain 972 / ATCC 24843) (Fission yeast)).